The chain runs to 77 residues: Translational regulator CsrA (77 aa).

The tract at residues 58 to 77 (ANRRTAEETLDQASRLLSQK) is disordered. A compositionally biased stretch (polar residues) spans 68–77 (DQASRLLSQK).

It belongs to the CsrA/RsmA family. As to quaternary structure, homodimer; the beta-strands of each monomer intercalate to form a hydrophobic core, while the alpha-helices form wings that extend away from the core.

The protein localises to the cytoplasm. Its function is as follows. A translational regulator that binds mRNA to regulate translation initiation and/or mRNA stability. Usually binds in the 5'-UTR at or near the Shine-Dalgarno sequence preventing ribosome-binding, thus repressing translation. Its main target seems to be the major flagellin gene, while its function is anatagonized by FliW. The chain is Translational regulator CsrA from Magnetococcus marinus (strain ATCC BAA-1437 / JCM 17883 / MC-1).